The following is a 441-amino-acid chain: UDP-N-acetylmuramoylalanine--D-glutamate ligase (441 aa).

129-135 (GTNGKST) serves as a coordination point for ATP.

It belongs to the MurCDEF family.

It localises to the cytoplasm. The enzyme catalyses UDP-N-acetyl-alpha-D-muramoyl-L-alanine + D-glutamate + ATP = UDP-N-acetyl-alpha-D-muramoyl-L-alanyl-D-glutamate + ADP + phosphate + H(+). Its pathway is cell wall biogenesis; peptidoglycan biosynthesis. Functionally, cell wall formation. Catalyzes the addition of glutamate to the nucleotide precursor UDP-N-acetylmuramoyl-L-alanine (UMA). The sequence is that of UDP-N-acetylmuramoylalanine--D-glutamate ligase from Zymomonas mobilis subsp. mobilis (strain ATCC 31821 / ZM4 / CP4).